The primary structure comprises 130 residues: Immunoglobulin kappa chain variable 9-120 (130 aa).

Positions M1–C22 are cleaved as a signal peptide. The interval D23 to C45 is framework-1. Residues C45 and C110 are joined by a disulfide bond. The complementarity-determining-1 stretch occupies residues R46–N56. The segment at W57–Y71 is framework-2. The complementarity-determining-2 stretch occupies residues A72–S78. Positions G79–C110 are framework-3. Positions L111–T119 are complementarity-determining-3. Residues F120–K129 form a framework-4 region.

The sequence is that of Immunoglobulin kappa chain variable 9-120 from Mus musculus (Mouse).